We begin with the raw amino-acid sequence, 74 residues long: Large ribosomal subunit protein eL38B (74 aa).

The protein belongs to the eukaryotic ribosomal protein eL38 family. In terms of assembly, component of the large ribosomal subunit (LSU). Mature yeast ribosomes consist of a small (40S) and a large (60S) subunit. The 40S small subunit contains 1 molecule of ribosomal RNA (18S rRNA) and at least 33 different proteins. The large 60S subunit contains 3 rRNA molecules (25S, 5.8S and 5S rRNA) and at least 46 different proteins.

The protein localises to the cytoplasm. Component of the ribosome, a large ribonucleoprotein complex responsible for the synthesis of proteins in the cell. The small ribosomal subunit (SSU) binds messenger RNAs (mRNAs) and translates the encoded message by selecting cognate aminoacyl-transfer RNA (tRNA) molecules. The large subunit (LSU) contains the ribosomal catalytic site termed the peptidyl transferase center (PTC), which catalyzes the formation of peptide bonds, thereby polymerizing the amino acids delivered by tRNAs into a polypeptide chain. The nascent polypeptides leave the ribosome through a tunnel in the LSU and interact with protein factors that function in enzymatic processing, targeting, and the membrane insertion of nascent chains at the exit of the ribosomal tunnel. The protein is Large ribosomal subunit protein eL38B (rpl3802) of Schizosaccharomyces pombe (strain 972 / ATCC 24843) (Fission yeast).